The primary structure comprises 42 residues: Alpha-conotoxin VnIB (42 aa).

Positions 1–22 are excised as a propeptide; sequence ASDGRNAAADDKASDPIALTVR. Intrachain disulfides connect Cys-25–Cys-31 and Cys-26–Cys-38. The residue at position 39 (Gly-39) is a Glycine amide.

The protein belongs to the conotoxin A superfamily. In terms of tissue distribution, expressed by the venom duct.

The protein resides in the secreted. Functionally, alpha-conotoxins act on postsynaptic membranes, they bind to the nicotinic acetylcholine receptors (nAChR) and thus inhibit them. This toxin potently and selectively inhibits human and rat alpha-6-beta-4/CHRNA6-CHRNB4 nAChR (IC(50)=12 nM on rat nAChR). It exhibits rapid binding and unbinding at this receptor. It also shows activity on rat alpha-6-beta-4/CHRNA6-CHRNB4 (IC(50)=12 nM), human alpha-6/alpha-3-beta-4 (CHRNA6/CHRNA3-CHRNB4) (IC(50)=5.3 nM), rat alpha-6/alpha-3-beta-4 (CHRNA6/CHRNA3-CHRNB4) (IC(50)=18 nM), rat alpha-3-beta-4/CHRNA3-CHRNB4 (IC(50)=320 nM), and rat alpha-6/alpha-3-beta-2-beta-3 (CHRNA6/CHRNA3-CHRNB2-CHRNB3) (IC(50)=4 uM). In Conus ventricosus (Mediterranean cone), this protein is Alpha-conotoxin VnIB.